A 203-amino-acid chain; its full sequence is Holliday junction branch migration complex subunit RuvA (203 aa).

Residues 1–63 form a domain I region; that stretch reads MIVSLRGTVE…EESQTLYGFT (63 aa). Positions 64–142 are domain II; it reads DDASRRMFVL…GFNDGIPAAA (79 aa). The interval 143-150 is flexible linker; that stretch reads QPQLSIAV. Positions 150-203 are domain III; the sequence is VDQAVQEQVLEALVGLGFSEKIALPVLSRVLRDSPELSKSQALRAALSELGTKN.

This sequence belongs to the RuvA family. Homotetramer. Forms an RuvA(8)-RuvB(12)-Holliday junction (HJ) complex. HJ DNA is sandwiched between 2 RuvA tetramers; dsDNA enters through RuvA and exits via RuvB. An RuvB hexamer assembles on each DNA strand where it exits the tetramer. Each RuvB hexamer is contacted by two RuvA subunits (via domain III) on 2 adjacent RuvB subunits; this complex drives branch migration. In the full resolvosome a probable DNA-RuvA(4)-RuvB(12)-RuvC(2) complex forms which resolves the HJ.

The protein localises to the cytoplasm. The RuvA-RuvB-RuvC complex processes Holliday junction (HJ) DNA during genetic recombination and DNA repair, while the RuvA-RuvB complex plays an important role in the rescue of blocked DNA replication forks via replication fork reversal (RFR). RuvA specifically binds to HJ cruciform DNA, conferring on it an open structure. The RuvB hexamer acts as an ATP-dependent pump, pulling dsDNA into and through the RuvAB complex. HJ branch migration allows RuvC to scan DNA until it finds its consensus sequence, where it cleaves and resolves the cruciform DNA. This is Holliday junction branch migration complex subunit RuvA from Corynebacterium diphtheriae (strain ATCC 700971 / NCTC 13129 / Biotype gravis).